The following is a 128-amino-acid chain: Cystatin-12 (128 aa).

The first 21 residues, 1–21, serve as a signal peptide directing secretion; the sequence is MLWKSVLPVALIVLGIHDCSF. Disulfide bonds link cysteine 82-cysteine 92 and cysteine 105-cysteine 125. The N-linked (GlcNAc...) asparagine glycan is linked to asparagine 122.

The protein belongs to the cystatin family.

It is found in the secreted. In terms of biological role, may play a specialized role in spermatogenesis. This chain is Cystatin-12 (Cst12), found in Rattus norvegicus (Rat).